The chain runs to 76 residues: Conotoxin Cl6.4 (76 aa).

Positions 1-19 (MTLTFLLVVALCMLTTCHT) are cleaved as a signal peptide. Residues 20–47 (ENYRDSQKVSPVRSIGKTQFARSLRLSE) constitute a propeptide that is removed on maturation. Intrachain disulfides connect Cys-50–Cys-66, Cys-57–Cys-70, and Cys-65–Cys-75.

In terms of tissue distribution, expressed by the venom duct.

The protein localises to the secreted. The chain is Conotoxin Cl6.4 from Californiconus californicus (California cone).